Here is an 87-residue protein sequence, read N- to C-terminus: Small ribosomal subunit protein uS15c (87 aa).

Belongs to the universal ribosomal protein uS15 family. Part of the 30S ribosomal subunit.

It localises to the plastid. Its subcellular location is the chloroplast. This chain is Small ribosomal subunit protein uS15c (rps15), found in Solanum tuberosum (Potato).